A 121-amino-acid polypeptide reads, in one-letter code: Large ribosomal subunit protein bL12 (121 aa).

This sequence belongs to the bacterial ribosomal protein bL12 family. As to quaternary structure, homodimer. Part of the ribosomal stalk of the 50S ribosomal subunit. Forms a multimeric L10(L12)X complex, where L10 forms an elongated spine to which 2 to 4 L12 dimers bind in a sequential fashion. Binds GTP-bound translation factors.

In terms of biological role, forms part of the ribosomal stalk which helps the ribosome interact with GTP-bound translation factors. Is thus essential for accurate translation. This chain is Large ribosomal subunit protein bL12, found in Shewanella halifaxensis (strain HAW-EB4).